A 313-amino-acid polypeptide reads, in one-letter code: Olfactory receptor 1M1 (313 aa).

Residues Met-1 to Thr-25 are Extracellular-facing. Asn-5 carries an N-linked (GlcNAc...) asparagine glycan. A helical membrane pass occupies residues Leu-26–Ile-49. Residues Ser-50–Thr-57 are Cytoplasmic-facing. The chain crosses the membrane as a helical span at residues Pro-58 to Pro-79. Over Lys-80 to Gln-100 the chain is Extracellular. Residues Cys-97 and Cys-189 are joined by a disulfide bond. Residues Met-101 to Tyr-120 traverse the membrane as a helical segment. Over Asp-121–Arg-139 the chain is Cytoplasmic. Residues Leu-140–Thr-158 form a helical membrane-spanning segment. Topologically, residues His-159–Arg-196 are extracellular. Residues Ile-197–Ala-219 traverse the membrane as a helical segment. Residues Arg-220–Lys-236 are Cytoplasmic-facing. Residues Ala-237–Tyr-259 traverse the membrane as a helical segment. The Extracellular segment spans residues Leu-260–Lys-272. Residues Ala-273–Leu-292 form a helical membrane-spanning segment. At Arg-293–Ser-313 the chain is on the cytoplasmic side.

It belongs to the G-protein coupled receptor 1 family.

The protein resides in the cell membrane. Its function is as follows. Odorant receptor. This chain is Olfactory receptor 1M1, found in Homo sapiens (Human).